The sequence spans 112 residues: UPF0102 protein C8J_0145 (112 aa).

This sequence belongs to the UPF0102 family.

In Campylobacter jejuni subsp. jejuni serotype O:6 (strain 81116 / NCTC 11828), this protein is UPF0102 protein C8J_0145.